Here is a 151-residue protein sequence, read N- to C-terminus: FUN14 domain-containing protein 1 (151 aa).

The short motif at 14–17 is the YXXL element; sequence YEVL. The next 3 helical transmembrane spans lie at 44–64, 71–91, and 130–150; these read YSVA…GFLF, AATA…GGYI, and FIKK…LGLA.

This sequence belongs to the FUN14 family.

Its subcellular location is the mitochondrion outer membrane. Acts as an activator of hypoxia-induced mitophagy, an important mechanism for mitochondrial quality control. This is FUN14 domain-containing protein 1 (fundc1) from Xenopus tropicalis (Western clawed frog).